We begin with the raw amino-acid sequence, 95 residues long: Small ribosomal subunit protein uS19 (95 aa).

Residues 73–95 (EFSPTRTYRGHGADKNAKGSKKK) are disordered.

It belongs to the universal ribosomal protein uS19 family.

Its function is as follows. Protein S19 forms a complex with S13 that binds strongly to the 16S ribosomal RNA. The protein is Small ribosomal subunit protein uS19 of Deinococcus geothermalis (strain DSM 11300 / CIP 105573 / AG-3a).